The chain runs to 102 residues: MYPAKYQVVPSGINYSDTPVGTFEQYQPQKAGESSEHFFSKVVVALIVILFAVGIVYLAYTLFLKDLILLLKAKKQKTTTEIGFGNTPLRRPGEGNPNGGPV.

A helical transmembrane segment spans residues V43 to F63. Positions I82–V102 are disordered.

The protein belongs to the mastrevirus movement protein family. Interacts with the capsid protein (CP). Part of a MP-CP-viral DNA complex.

Its subcellular location is the host membrane. In terms of biological role, involved in the viral transport within, and between cells. The protein is Movement protein of Tobacco yellow dwarf virus (strain Australia) (TYDV).